Consider the following 152-residue polypeptide: MSTHHVFVYGSLKKGQPNHHELLNSNNGQAEFITCAQTKEPYPLVIATKHNIPFLLNVPGSGKQVSGEIYSVDQKMLEFLDWFEKCPDWYQRTSIQLEILKGNGESGRIEEASVYSKINFEPDWLNKPTHESYDTNGDHGLKFVCREDRKDD.

Position 9 to 12 (9 to 12 (YGSL)) interacts with substrate. Glu84 acts as the Proton acceptor in catalysis.

It belongs to the gamma-glutamylcyclotransferase family.

The enzyme catalyses epsilon-(gamma-L-glutamyl)-L-lysine = 5-oxo-L-proline + L-lysine. Its function is as follows. May contribute to degradation of proteins cross-linked by transglutaminases by degrading the cross-link between a lysine and a glutamic acid residue. Catalyzes the formation of 5-oxo-L-proline from L-gamma-glutamyl-L-epsilon-lysine. The sequence is that of Gamma-glutamylaminecyclotransferase C (ggact.3) from Danio rerio (Zebrafish).